We begin with the raw amino-acid sequence, 1238 residues long: Virulence sensor protein BvgS (1238 aa).

Residues 1–30 (MPAPHRLYPRSLICLAQALLAWALLAWAPA) form the signal peptide. At 33–307 (SQELTLVGKA…REQQWMANHP (275 aa)) the chain is on the cytoplasmic side. The helical transmembrane segment at 308 to 331 (VVKVAVLNLFAPFTLFRTDEQFGG) threads the bilayer. Residues 332 to 541 (ISAAVLQLLQ…PRTWYAYRNE (210 aa)) lie on the Periplasmic side of the membrane. The helical transmembrane segment at 542 to 563 (IYLLIGLGLLSALLFLSWIVYL) threads the bilayer. At 564 to 1238 (RRQIRQRKRA…LEQRPHQGQP (675 aa)) the chain is on the cytoplasmic side. Positions 580–651 (QLEFMRVLID…MHEFLLTRMS (72 aa)) constitute a PAS domain. Positions 652-708 (AEREPRFEDRDVTLHGRTRHVYQWTVPYGDSLGELKGIIGGWIDITERAELLRELHD) constitute a PAC domain. In terms of domain architecture, Histidine kinase spans 726 to 948 (TMSHEIRTPM…TVSVDLRLTM (223 aa)). His-729 is modified (phosphohistidine; by autocatalysis). Positions 974-1095 (RVLVVDDHKP…ALRQRLNEAA (122 aa)) constitute a Response regulatory domain. Asp-1023 carries the post-translational modification 4-aspartylphosphate. The region spanning 1133–1228 (DEALIRQLLE…AALETQLRAW (96 aa)) is the HPt domain. His-1172 carries the phosphohistidine modification.

Activation requires a sequential transfer of a phosphate group from a His in the primary transmitter domain, to an Asp in the receiver domain and to a His in the secondary transmitter domain.

The protein localises to the cell inner membrane. It catalyses the reaction ATP + protein L-histidine = ADP + protein N-phospho-L-histidine.. Member of the two-component regulatory system BvgS/BvgA. Phosphorylates BvgA via a four-step phosphorelay in response to environmental signals. This is Virulence sensor protein BvgS (bvgS) from Bordetella bronchiseptica (strain ATCC BAA-588 / NCTC 13252 / RB50) (Alcaligenes bronchisepticus).